The following is a 94-amino-acid chain: MTKSELIERLAGQHAHIQAKVVEDAVKEMLEHMATTLASGERIEIRGFGSFSLHYRAPRIGRNPKTGDRVELEGKYVPHFKPGKELRDRANIYG.

It belongs to the bacterial histone-like protein family. As to quaternary structure, heterodimer of an alpha and a beta chain.

In terms of biological role, this protein is one of the two subunits of integration host factor, a specific DNA-binding protein that functions in genetic recombination as well as in transcriptional and translational control. The sequence is that of Integration host factor subunit beta from Sodalis glossinidius (strain morsitans).